We begin with the raw amino-acid sequence, 679 residues long: Kelch-like protein diablo (679 aa).

A compositionally biased stretch (gly residues) spans 1–48 (MGDLPGGGGGAAGGAGAAGGGGGGGNGAAGSSSSGGGASGSGGGGPGS). The tract at residues 1-84 (MGDLPGGGGG…RLSHTSEKHP (84 aa)) is disordered. Positions 101 to 168 (CDVVLNVGGR…CYTAHIIVEE (68 aa)) constitute a BTB domain. The region spanning 203–305 (CLGIRAFADT…SPKFLVGTVG (103 aa)) is the BACK domain. 6 Kelch repeats span residues 352–398 (VLFA…VLND), 400–446 (LYAV…VLDG), 447–493 (FLYA…VLGG), 495–540 (LYAI…VFNN), 542–587 (IYAV…VVNG), and 588–634 (QLYA…VMRA). A disordered region spans residues 643 to 679 (CDNNSSNNNNNNYNLKHQQQQPQQQQQQQQQQTQQQL). The segment covering 645–679 (NNSSNNNNNNYNLKHQQQQPQQQQQQQQQQTQQQL) has biased composition (low complexity).

It participates in protein modification; protein ubiquitination. Functionally, probable substrate-specific adapter of an E3 ubiquitin-protein ligase complex which mediates the ubiquitination and subsequent proteasomal degradation of target proteins. May have a role in synapse differentiation and growth. This chain is Kelch-like protein diablo, found in Drosophila willistoni (Fruit fly).